Consider the following 38-residue polypeptide: Antimicrobial peptide 1 (38 aa).

Disulfide bonds. In terms of tissue distribution, expressed in flowers but not in leaves, seeds or roots (at protein level).

In terms of biological role, antimicrobial peptide. Active against fungal species B.cinerea (IC(50)=5.8 uM) and A.niger (IC(50)=5.6 uM) but not against F.oxysporum, F.graminearum, B.sorokinina and P.debaryanum at concentrations below 10 uM. Active against bacterial species P.syringae, B.subtilis and X.campestris. In Taraxacum officinale (Common dandelion), this protein is Antimicrobial peptide 1.